A 100-amino-acid polypeptide reads, in one-letter code: NADH-quinone oxidoreductase subunit K (100 aa).

Transmembrane regions (helical) follow at residues 2 to 22 (VPTT…MIGV), 29 to 49 (IMVF…LVAF), and 63 to 83 (FIVM…IVAI).

Belongs to the complex I subunit 4L family. NDH-1 is composed of 15 different subunits. Subunits NuoA, H, J, K, L, M, N constitute the membrane sector of the complex.

It is found in the cell membrane. The enzyme catalyses a quinone + NADH + 5 H(+)(in) = a quinol + NAD(+) + 4 H(+)(out). NDH-1 shuttles electrons from NADH, via FMN and iron-sulfur (Fe-S) centers, to quinones in the respiratory chain. The immediate electron acceptor for the enzyme in this species is believed to be a menaquinone. Couples the redox reaction to proton translocation (for every two electrons transferred, four hydrogen ions are translocated across the cytoplasmic membrane), and thus conserves the redox energy in a proton gradient. This is NADH-quinone oxidoreductase subunit K from Deinococcus deserti (strain DSM 17065 / CIP 109153 / LMG 22923 / VCD115).